We begin with the raw amino-acid sequence, 259 residues long: Tryptophan synthase alpha chain (259 aa).

Active-site proton acceptor residues include Glu48 and Asp59.

It belongs to the TrpA family. As to quaternary structure, tetramer of two alpha and two beta chains.

The catalysed reaction is (1S,2R)-1-C-(indol-3-yl)glycerol 3-phosphate + L-serine = D-glyceraldehyde 3-phosphate + L-tryptophan + H2O. The protein operates within amino-acid biosynthesis; L-tryptophan biosynthesis; L-tryptophan from chorismate: step 5/5. In terms of biological role, the alpha subunit is responsible for the aldol cleavage of indoleglycerol phosphate to indole and glyceraldehyde 3-phosphate. The chain is Tryptophan synthase alpha chain from Syntrophomonas wolfei subsp. wolfei (strain DSM 2245B / Goettingen).